The following is a 279-amino-acid chain: Ribosomal RNA small subunit methyltransferase J (279 aa).

Residues 138-139 (ER) and Asp194 each bind S-adenosyl-L-methionine.

It belongs to the methyltransferase superfamily. RsmJ family.

It is found in the cytoplasm. The enzyme catalyses guanosine(1516) in 16S rRNA + S-adenosyl-L-methionine = N(2)-methylguanosine(1516) in 16S rRNA + S-adenosyl-L-homocysteine + H(+). Functionally, specifically methylates the guanosine in position 1516 of 16S rRNA. In Acinetobacter baumannii (strain ATCC 17978 / DSM 105126 / CIP 53.77 / LMG 1025 / NCDC KC755 / 5377), this protein is Ribosomal RNA small subunit methyltransferase J.